A 629-amino-acid polypeptide reads, in one-letter code: Microtubule-associated protein 70-3 (629 aa).

Residues 1–54 form a disordered region; sequence MEEGGYAFEVNNGRPTASEFGTTARISSPSLTMSSSFREGGGGGGSKGLTRRRS. The span at 13 to 33 shows a compositional bias: polar residues; it reads GRPTASEFGTTARISSPSLTM. Residues 75–375 adopt a coiled-coil conformation; sequence VKVELNRLEN…ADRAAKSEAQ (301 aa). Residues 257 to 493 form a required for targeting to microtubules region; that stretch reads ILDKLHRQKV…FPLNQSSEGT (237 aa). 3 disordered regions span residues 391–421, 458–519, and 578–629; these read LRGP…LGGA, GTSR…DSVP, and AMEK…RSTQ. Over residues 393–416 the composition is skewed to polar residues; sequence GPSSSGNRSTPEGRSMSNGPSRRQ. The stretch at 544–592 forms a coiled coil; that stretch reads LRDKDEAIEMLAKKVETLTKAMEVEAKKMRREVAAMEKEVSAMRVDNKG. Residues 578–596 are compositionally biased toward basic and acidic residues; it reads AMEKEVSAMRVDNKGSDSR. Polar residues predominate over residues 603–613; sequence NSKGASTTAQL.

It belongs to the MAP70 family.

It is found in the cytoplasm. It localises to the cytoskeleton. Functionally, plant-specific protein that interact with microtubules. The sequence is that of Microtubule-associated protein 70-3 (MAP70.3) from Arabidopsis thaliana (Mouse-ear cress).